The primary structure comprises 245 residues: Polyhedrin (245 aa).

This sequence belongs to the polyhedrin family.

Major component of the virus occlusion bodies, which are large proteinaceous structures (polyhedra), that protect the virus from the outside environment for extended periods until they are ingested by insect larvae. The polypeptide is Polyhedrin (Lepidoptera (butterflies and moths)).